The sequence spans 410 residues: Structure-specific endonuclease subunit SLX1 homolog (410 aa).

The GIY-YIG domain occupies 6–89 (QLHYCYFLLS…NICKVTRDNI (84 aa)).

Belongs to the SLX1 family. Forms a heterodimer with a member of the SLX4 family. A divalent metal cation is required as a cofactor.

Its subcellular location is the nucleus. Functionally, catalytic subunit of a heterodimeric structure-specific endonuclease that resolves DNA secondary structures generated during DNA repair and recombination. Has endonuclease activity towards branched DNA substrates, introducing single-strand cuts in duplex DNA close to junctions with ss-DNA. The sequence is that of Structure-specific endonuclease subunit SLX1 homolog from Cryptosporidium parvum (strain Iowa II).